Here is a 577-residue protein sequence, read N- to C-terminus: ABC transporter G family member 4 (577 aa).

An ABC transporter domain is found at 6 to 248 (LSTSSISYAK…LLSKGFTVPS (243 aa)). Residue 48 to 55 (GPSGAGKS) coordinates ATP. In terms of domain architecture, ABC transmembrane type-2 spans 299–509 (TEISLLSSRF…ALDALLINEY (211 aa)). Transmembrane regions (helical) follow at residues 318-338 (LLLTNILESLVVGLVLGTIYL), 353-373 (LFAFTLTFLLSSTTQTLPIFI), 400-420 (VFLPYLLLIAIIYSVSLYFLV), 429-449 (LAYFVLVIWIIVLMANSFVLF), 458-478 (IAGTSSVTILLAAFFLFSGYF), 487-507 (YWLFMYFFSMYKYALDALLIN), and 548-568 (FNVYMLLGFFVLYRVLCFLVL).

This sequence belongs to the ABC transporter superfamily. ABCG family. Eye pigment precursor importer (TC 3.A.1.204) subfamily.

The protein resides in the membrane. The protein is ABC transporter G family member 4 (ABCG4) of Arabidopsis thaliana (Mouse-ear cress).